The sequence spans 1024 residues: Integrator complex subunit 7 homolog (1024 aa).

2 stretches are compositionally biased toward polar residues: residues 1–11 (MSKYKNSSLLN) and 19–36 (PSLSNGSSVLGISNQLPP). 3 disordered regions span residues 1 to 109 (MSKY…PTNS), 472 to 502 (DNNNNNNNNNNNNNNNNNNNNNNNNNNNNNN), and 842 to 863 (NNNNNNNNNNNNNNNNNNNNNN). 3 stretches are compositionally biased toward low complexity: residues 44-77 (STNNQQSTTTPTTVTIQPPSSSISTPSPTTNNTV), 85-96 (TAGSSTSSASSV), and 473-502 (NNNNNNNNNNNNNNNNNNNNNNNNNNNNNN).

The protein belongs to the Integrator subunit 7 family. In terms of assembly, component of the Integrator complex. The core complex associates with protein phosphatase 2A subunits, to form the Integrator-PP2A (INTAC) complex.

The protein resides in the nucleus. It localises to the chromosome. It is found in the cytoplasm. In terms of biological role, component of the integrator complex, a multiprotein complex that terminates RNA polymerase II (Pol II) transcription in the promoter-proximal region of genes. The integrator complex provides a quality checkpoint during transcription elongation by driving premature transcription termination of transcripts that are unfavorably configured for transcriptional elongation: the complex terminates transcription by (1) catalyzing dephosphorylation of the C-terminal domain (CTD) of Pol II subunit polr2a, (2) degrading the exiting nascent RNA transcript via endonuclease activity and (3) promoting the release of Pol II from bound DNA. The integrator complex is also involved in terminating the synthesis of non-coding Pol II transcripts, such as enhancer RNAs (eRNAs), small nuclear RNAs (snRNAs), telomerase RNAs and long non-coding RNAs (lncRNAs). In Dictyostelium discoideum (Social amoeba), this protein is Integrator complex subunit 7 homolog (ints7).